The sequence spans 208 residues: Methylthioribulose-1-phosphate dehydratase (208 aa).

Zn(2+)-binding residues include H98 and H100.

This sequence belongs to the aldolase class II family. MtnB subfamily. The cofactor is Zn(2+).

The enzyme catalyses 5-(methylsulfanyl)-D-ribulose 1-phosphate = 5-methylsulfanyl-2,3-dioxopentyl phosphate + H2O. It participates in amino-acid biosynthesis; L-methionine biosynthesis via salvage pathway; L-methionine from S-methyl-5-thio-alpha-D-ribose 1-phosphate: step 2/6. In terms of biological role, catalyzes the dehydration of methylthioribulose-1-phosphate (MTRu-1-P) into 2,3-diketo-5-methylthiopentyl-1-phosphate (DK-MTP-1-P). The polypeptide is Methylthioribulose-1-phosphate dehydratase (Hahella chejuensis (strain KCTC 2396)).